A 951-amino-acid chain; its full sequence is 2-oxoglutarate dehydrogenase E1 component (951 aa).

A disordered region spans residues 906-925 (RRRRSSPAEGNPTAHKQEQA).

This sequence belongs to the alpha-ketoglutarate dehydrogenase family. As to quaternary structure, homodimer. Part of the 2-oxoglutarate dehydrogenase (OGDH) complex composed of E1 (2-oxoglutarate dehydrogenase), E2 (dihydrolipoamide succinyltransferase) and E3 (dihydrolipoamide dehydrogenase); the complex contains multiple copies of the three enzymatic components (E1, E2 and E3). Thiamine diphosphate serves as cofactor.

It carries out the reaction N(6)-[(R)-lipoyl]-L-lysyl-[protein] + 2-oxoglutarate + H(+) = N(6)-[(R)-S(8)-succinyldihydrolipoyl]-L-lysyl-[protein] + CO2. In terms of biological role, E1 component of the 2-oxoglutarate dehydrogenase (OGDH) complex which catalyzes the decarboxylation of 2-oxoglutarate, the first step in the conversion of 2-oxoglutarate to succinyl-CoA and CO(2). The chain is 2-oxoglutarate dehydrogenase E1 component from Exiguobacterium sp. (strain ATCC BAA-1283 / AT1b).